The sequence spans 391 residues: MDIKRVTVIVLDGVGIGEAPDADEYGDVGSHSLANTAAAINGLDLPNMAALGLGCISEMQGVACPESFSGSYGKMQPLSKGKDTVSGHWEMMGIVLPTPFPVYPDGFPAAVIEPFKQKIGRGVLGNKSASGTDILEELGMEHIRTGDPIVYTSADSVFQIAAHEDVITPKELYAMCEIAREILVGEHAVGRVIARPFIGDSPETFKRTIRRHDYALTPETPTILDKVVAAGKQVYSVGKIDDIFGNRGISVSNHTVDNAASLEAVLEFLDVDFEGLLFANFIEFDMIYGHRNDPVGYANALKAVDQRLPELQAKLRAGDLVVITADHGVDPTTPGSNHSREYVPLLVFGPEVRSGVNLGTRQTLSDLAATIAEIFGLEQPLHGTSFLSELQ.

The Mn(2+) site is built by D12, D285, H290, D326, H327, and H338.

The protein belongs to the phosphopentomutase family. Requires Mn(2+) as cofactor.

The protein localises to the cytoplasm. The enzyme catalyses 2-deoxy-alpha-D-ribose 1-phosphate = 2-deoxy-D-ribose 5-phosphate. It catalyses the reaction alpha-D-ribose 1-phosphate = D-ribose 5-phosphate. The protein operates within carbohydrate degradation; 2-deoxy-D-ribose 1-phosphate degradation; D-glyceraldehyde 3-phosphate and acetaldehyde from 2-deoxy-alpha-D-ribose 1-phosphate: step 1/2. Isomerase that catalyzes the conversion of deoxy-ribose 1-phosphate (dRib-1-P) and ribose 1-phosphate (Rib-1-P) to deoxy-ribose 5-phosphate (dRib-5-P) and ribose 5-phosphate (Rib-5-P), respectively. The polypeptide is Phosphopentomutase (Herpetosiphon aurantiacus (strain ATCC 23779 / DSM 785 / 114-95)).